The chain runs to 482 residues: F-box/LRR-repeat protein At3g58930 (482 aa).

Residues 1 to 47 form the F-box domain; the sequence is MDRVSNLPDGVRGHILSFLPAKHIALTSVLSKSWLNLWKLIPILDID. 5 LRR repeats span residues 122–150, 175–200, 222–248, 313–344, and 345–370; these read SYED…KIRN, SDLI…RMAS, GTGC…NYSD, ILYL…GIKS, and EEGR…IIEG.

This Arabidopsis thaliana (Mouse-ear cress) protein is F-box/LRR-repeat protein At3g58930.